A 101-amino-acid chain; its full sequence is MKIISMSMDSWIQRAALMLLGLVIVAPFFGWTASIVGYAEPLENAAKMTGATDAAMNLNPGVLPDYTVGGFSGPIGTLISAGVGTVLTLIVAFGAGRLLES.

A signal peptide spans 1 to 32 (MKIISMSMDSWIQRAALMLLGLVIVAPFFGWT). Residues 75–95 (IGTLISAGVGTVLTLIVAFGA) traverse the membrane as a helical segment.

It localises to the cell membrane. In terms of biological role, may be involved in metal transport. This Haloquadratum walsbyi (strain DSM 16790 / HBSQ001) protein is Putative metal transport protein HQ_3622A.